The following is a 177-amino-acid chain: 2-C-methyl-D-erythritol 2,4-cyclodiphosphate synthase (177 aa).

Positions 8 and 10 each coordinate a divalent metal cation. Residues 8-10 and 34-35 each bind 4-CDP-2-C-methyl-D-erythritol 2-phosphate; these read DVH and HS. His-42 lines the a divalent metal cation pocket. 4-CDP-2-C-methyl-D-erythritol 2-phosphate-binding positions include 56 to 58, 61 to 65, 132 to 135, Phe-139, and Arg-142; these read DIG, FPDTD, and TTEE.

Belongs to the IspF family. In terms of assembly, homotrimer. The cofactor is a divalent metal cation.

It carries out the reaction 4-CDP-2-C-methyl-D-erythritol 2-phosphate = 2-C-methyl-D-erythritol 2,4-cyclic diphosphate + CMP. The protein operates within isoprenoid biosynthesis; isopentenyl diphosphate biosynthesis via DXP pathway; isopentenyl diphosphate from 1-deoxy-D-xylulose 5-phosphate: step 4/6. Its function is as follows. Involved in the biosynthesis of isopentenyl diphosphate (IPP) and dimethylallyl diphosphate (DMAPP), two major building blocks of isoprenoid compounds. Catalyzes the conversion of 4-diphosphocytidyl-2-C-methyl-D-erythritol 2-phosphate (CDP-ME2P) to 2-C-methyl-D-erythritol 2,4-cyclodiphosphate (ME-CPP) with a corresponding release of cytidine 5-monophosphate (CMP). In Agathobacter rectalis (strain ATCC 33656 / DSM 3377 / JCM 17463 / KCTC 5835 / VPI 0990) (Eubacterium rectale), this protein is 2-C-methyl-D-erythritol 2,4-cyclodiphosphate synthase.